Consider the following 295-residue polypeptide: MIKVQREAEPAVLNLTDSDSIGFKELEAAKKTTFTKDTKFPFEAYKDESVKNLLKKMFNGKCGYCESIINVTSYEEIEHFRPKKAINIEGIQGLTYPGYYWLAMSWNNLLISCQRCNRSHKKNYFPIENESNRAKAPGEESGEEVLLLNPCEDDPSEHLEFKDTGIIEFKEGSKKGEKSIKVYALHRRELTEERAKVAKDIELKKVQILDGLSTLKVLLRYQEDSDLQKEIEKTVSNIISLYDFIFEYENDPNRPYQAMVTQITSDFLSERKELINKLKTTSNRKNSCEQSHISS.

Component of antiviral defense system Septu type II, composed of PtuA and PtuB. Expression of Septu type II in B.subtilis (strain BEST7003) confers resistance to phages SBSphiC and SpBeta. May be a nuclease. This Bacillus mycoides (strain KBAB4) (Bacillus weihenstephanensis) protein is Septu protein PtuB.